The primary structure comprises 432 residues: Adenylosuccinate synthetase (432 aa).

GTP contacts are provided by residues G13–K19 and G41–T43. D14 acts as the Proton acceptor in catalysis. 2 residues coordinate Mg(2+): D14 and G41. IMP-binding positions include D14–K17, N39–H42, T130, R144, Q225, T240, and R304. Residue H42 is the Proton donor of the active site. Substrate is bound at residue A300 to R306. GTP contacts are provided by residues R306, K332 to D334, and S415 to G417.

It belongs to the adenylosuccinate synthetase family. Homodimer. It depends on Mg(2+) as a cofactor.

Its subcellular location is the cytoplasm. The enzyme catalyses IMP + L-aspartate + GTP = N(6)-(1,2-dicarboxyethyl)-AMP + GDP + phosphate + 2 H(+). Its pathway is purine metabolism; AMP biosynthesis via de novo pathway; AMP from IMP: step 1/2. Functionally, plays an important role in the de novo pathway of purine nucleotide biosynthesis. Catalyzes the first committed step in the biosynthesis of AMP from IMP. This chain is Adenylosuccinate synthetase, found in Erwinia tasmaniensis (strain DSM 17950 / CFBP 7177 / CIP 109463 / NCPPB 4357 / Et1/99).